The chain runs to 84 residues: Putative defensin-like protein 101 (84 aa).

Positions 1–27 are cleaved as a signal peptide; that stretch reads MDITKNIVTLLLVVLFPILFYYNNVLA. 4 cysteine pairs are disulfide-bonded: Cys39–Cys81, Cys43–Cys67, Cys52–Cys79, and Cys56–Cys80.

It belongs to the DEFL family.

It localises to the secreted. In Arabidopsis thaliana (Mouse-ear cress), this protein is Putative defensin-like protein 101.